Reading from the N-terminus, the 78-residue chain is Cytochrome c-551 (78 aa).

Positions 14, 17, 18, and 55 each coordinate heme c.

In terms of processing, binds 1 heme c group covalently per subunit.

In Halorhodospira halophila (Ectothiorhodospira halophila), this protein is Cytochrome c-551.